The following is a 344-amino-acid chain: 2-methyl-6-phytyl-1,4-hydroquinone methyltransferase, chloroplastic (344 aa).

A chloroplast-targeting transit peptide spans 1-62 (MACSMLNGVD…LTTVTKCTLS (62 aa)). The Chloroplast intermembrane portion of the chain corresponds to 63–313 (ASERPASQPR…PVHPLVFLYR (251 aa)). An SAM motif I region spans residues 121–130 (VVDVGGGTGF). The tract at residues 166 to 179 (CRIIEGDAEDLPFP) is SAM motif II. The segment at 207–220 (RVLKLGGKACLIGP) is SAM motif III. The chain crosses the membrane as a helical span at residues 314-334 (FLLGALASTYYVLVPIYMWIK). Residues 335–344 (DKIFPKGMPL) are Stromal-facing.

It belongs to the class I-like SAM-binding methyltransferase superfamily. MPBQ/MBSQ MT family.

It is found in the plastid. Its subcellular location is the chloroplast inner membrane. The catalysed reaction is 2-methyl-6-phytyl-1,4-benzene-1,4-diol + S-adenosyl-L-methionine = 2,3-dimethyl-6-phytylbenzene-1,4-diol + S-adenosyl-L-homocysteine + H(+). It carries out the reaction 2-methyl-6-(all-trans-nonaprenyl)benzene-1,4-diol + S-adenosyl-L-methionine = plastoquinol-9 + S-adenosyl-L-homocysteine + H(+). The enzyme catalyses 6-geranylgeranyl-2-methylbenzene-1,4-diol + S-adenosyl-L-methionine = 6-geranylgeranyl-2,3-dimethylbenzene-1,4-diol + S-adenosyl-L-homocysteine + H(+). Its pathway is cofactor biosynthesis; tocopherol biosynthesis. Involved in a key methylation step in both tocopherols (vitamin E) and plastoquinone synthesis. Catalyzes the conversion of 2-methyl-6-phytyl-1,4-hydroquinone (MPBQ) to 2,3-dimethyl-6-phytyl-1,4-hydroquinone (DMPQ, a substrate for tocopherol cyclase), and 2-methyl-6-solanyl-1,4-benzoquinone (MSBQ) to plastoquinone. The sequence is that of 2-methyl-6-phytyl-1,4-hydroquinone methyltransferase, chloroplastic from Spinacia oleracea (Spinach).